The chain runs to 468 residues: 3-isopropylmalate dehydratase large subunit (468 aa).

The [4Fe-4S] cluster site is built by Cys-347, Cys-407, and Cys-410.

Belongs to the aconitase/IPM isomerase family. LeuC type 1 subfamily. In terms of assembly, heterodimer of LeuC and LeuD. [4Fe-4S] cluster is required as a cofactor.

The enzyme catalyses (2R,3S)-3-isopropylmalate = (2S)-2-isopropylmalate. Its pathway is amino-acid biosynthesis; L-leucine biosynthesis; L-leucine from 3-methyl-2-oxobutanoate: step 2/4. In terms of biological role, catalyzes the isomerization between 2-isopropylmalate and 3-isopropylmalate, via the formation of 2-isopropylmaleate. This Rippkaea orientalis (strain PCC 8801 / RF-1) (Cyanothece sp. (strain PCC 8801)) protein is 3-isopropylmalate dehydratase large subunit.